Here is a 355-residue protein sequence, read N- to C-terminus: Elongation factor Ts (355 aa).

Residues 82–85 (TDFV) form an involved in Mg(2+) ion dislocation from EF-Tu region.

It belongs to the EF-Ts family.

The protein resides in the cytoplasm. Functionally, associates with the EF-Tu.GDP complex and induces the exchange of GDP to GTP. It remains bound to the aminoacyl-tRNA.EF-Tu.GTP complex up to the GTP hydrolysis stage on the ribosome. The sequence is that of Elongation factor Ts from Helicobacter pylori (strain HPAG1).